The primary structure comprises 64 residues: Translation machinery-associated protein 7 homolog (64 aa).

Positions Met-1–Lys-64 are disordered. Residues Glu-21–Gly-50 adopt a coiled-coil conformation. Residues Met-27–Lys-44 are compositionally biased toward basic and acidic residues.

This sequence belongs to the TMA7 family.

This chain is Translation machinery-associated protein 7 homolog, found in Aedes aegypti (Yellowfever mosquito).